The following is a 379-amino-acid chain: NAD-dependent protein deacetylase sirtuin-2 (379 aa).

Over residues 1–10 (MSEEVSKRVE) the composition is skewed to basic and acidic residues. Residues 1–32 (MSEEVSKRVEEEADTPGLEGQSDDSSDEGDAS) form a disordered region. A compositionally biased stretch (acidic residues) spans 21–32 (QSDDSSDEGDAS). Residues 55–335 (KVLDELTLDS…MTLAELLGWK (281 aa)) form the Deacetylase sirtuin-type domain. NAD(+)-binding positions include 83 to 87 (AGIST), 93 to 95 (DFR), and 165 to 168 (QNID). Residue His-185 is the Proton acceptor of the active site. Zn(2+) contacts are provided by Cys-193, Cys-198, Cys-219, and Cys-222. Residues 260–261 (TS), 284–286 (NME), and Cys-321 contribute to the NAD(+) site. The span at 349–361 (IDSKDAKKTDKEA) shows a compositional bias: basic and acidic residues. Residues 349 to 379 (IDSKDAKKTDKEASQSSKSAVAEAEKTDKTE) are disordered.

It belongs to the sirtuin family. Class I subfamily. Zn(2+) serves as cofactor.

The protein resides in the cytoplasm. It is found in the nucleus. It catalyses the reaction N(6)-acetyl-L-lysyl-[protein] + NAD(+) + H2O = 2''-O-acetyl-ADP-D-ribose + nicotinamide + L-lysyl-[protein]. The enzyme catalyses N(6)-tetradecanoyl-L-lysyl-[protein] + NAD(+) + H2O = 2''-O-tetradecanoyl-ADP-D-ribose + nicotinamide + L-lysyl-[protein]. It carries out the reaction N(6)-hexadecanoyl-L-lysyl-[protein] + NAD(+) + H2O = 2''-O-hexadecanoyl-ADP-D-ribose + nicotinamide + L-lysyl-[protein]. In terms of biological role, NAD-dependent protein deacetylase, which deacetylates internal lysines on histone and alpha-tubulin as well as many other proteins such as key transcription factors. Participates in the modulation of multiple and diverse biological processes such as cell cycle control, genomic integrity, microtubule dynamics, cell differentiation, metabolic networks, and autophagy. Plays a major role in the control of cell cycle progression and genomic stability. Deacetylates histone H4 at 'Lys-16' (H4K16ac) at the VEGFA promoter. Thereby contributes to regulate expression of vegfa, a key regulator of angiogenesis. In addition to protein deacetylase activity, also has activity toward long-chain fatty acyl groups and mediates protein-lysine demyristoylation and depalmitoylation of target proteins. This chain is NAD-dependent protein deacetylase sirtuin-2 (sirt2), found in Danio rerio (Zebrafish).